The following is a 199-amino-acid chain: Pyridoxine/pyridoxamine 5'-phosphate oxidase (199 aa).

Residues 44-49 (RTVLLK), 59-60 (YT), Lys-66, and Gln-91 contribute to the FMN site. Lys-49 provides a ligand contact to substrate. Residues Tyr-109, Arg-113, and Ser-117 each coordinate substrate. FMN contacts are provided by residues 126-127 (QS) and Trp-171. Substrate is bound at residue 177–179 (RLH). Arg-181 lines the FMN pocket.

This sequence belongs to the pyridoxamine 5'-phosphate oxidase family. Homodimer. FMN is required as a cofactor.

It carries out the reaction pyridoxamine 5'-phosphate + O2 + H2O = pyridoxal 5'-phosphate + H2O2 + NH4(+). It catalyses the reaction pyridoxine 5'-phosphate + O2 = pyridoxal 5'-phosphate + H2O2. Its pathway is cofactor metabolism; pyridoxal 5'-phosphate salvage; pyridoxal 5'-phosphate from pyridoxamine 5'-phosphate: step 1/1. It functions in the pathway cofactor metabolism; pyridoxal 5'-phosphate salvage; pyridoxal 5'-phosphate from pyridoxine 5'-phosphate: step 1/1. Catalyzes the oxidation of either pyridoxine 5'-phosphate (PNP) or pyridoxamine 5'-phosphate (PMP) into pyridoxal 5'-phosphate (PLP). The sequence is that of Pyridoxine/pyridoxamine 5'-phosphate oxidase from Xanthomonas axonopodis pv. citri (strain 306).